A 131-amino-acid polypeptide reads, in one-letter code: uncharacterized protein (131 aa).

Positions 1–19 (MRESLFIIFFQFVCHSSNS) are cleaved as a signal peptide. Helical transmembrane passes span 33–53 (PLLT…ALFF) and 111–131 (VSFN…FFLF).

It localises to the membrane. This is an uncharacterized protein from Saccharomyces cerevisiae (strain ATCC 204508 / S288c) (Baker's yeast).